Reading from the N-terminus, the 486-residue chain is Malonate-semialdehyde dehydrogenase (486 aa).

Residues Phe-154, Lys-178, Glu-181, Arg-182, and Ser-231 each contribute to the NAD(+) site. The active-site Nucleophile is Cys-286. Glu-386 contacts NAD(+).

The protein belongs to the aldehyde dehydrogenase family. IolA subfamily. In terms of assembly, homotetramer.

The enzyme catalyses 3-oxopropanoate + NAD(+) + CoA + H2O = hydrogencarbonate + acetyl-CoA + NADH + H(+). The catalysed reaction is 2-methyl-3-oxopropanoate + NAD(+) + CoA + H2O = propanoyl-CoA + hydrogencarbonate + NADH + H(+). Its pathway is polyol metabolism; myo-inositol degradation into acetyl-CoA; acetyl-CoA from myo-inositol: step 7/7. In terms of biological role, catalyzes the oxidation of malonate semialdehyde (MSA) and methylmalonate semialdehyde (MMSA) into acetyl-CoA and propanoyl-CoA, respectively. Is involved in a myo-inositol catabolic pathway. Bicarbonate, and not CO2, is the end-product of the enzymatic reaction. In Bacillus cereus (strain ATCC 10987 / NRS 248), this protein is Malonate-semialdehyde dehydrogenase.